Consider the following 280-residue polypeptide: 3-hydroxyacyl-thioester dehydratase X (280 aa).

The disordered stretch occupies residues 149-170; sequence QRTSLSGEPKPPPQKKPKLPPP. One can recognise a MaoC-like domain in the interval 162 to 256; sequence QKKPKLPPPA…TAGLYVAEGD (95 aa).

It belongs to the enoyl-CoA hydratase/isomerase family.

The enzyme catalyses a (3R)-3-hydroxyacyl-CoA = a (2E)-enoyl-CoA + H2O. The catalysed reaction is (2E)-octenoyl-CoA + H2O = (3R)-hydroxyoctanoyl-CoA. It catalyses the reaction (3R)-3-hydroxydodecanoyl-CoA = (2E)-dodecenoyl-CoA + H2O. It carries out the reaction (3R)-hydroxyhexadecanoyl-CoA = (2E)-hexadecenoyl-CoA + H2O. The enzyme catalyses (3R)-hydroxyeicosanoyl-CoA = (2E)-eicosenoyl-CoA + H2O. The catalysed reaction is (3R)-3-hydroxybutanoyl-CoA = (2E)-butenoyl-CoA + H2O. In terms of biological role, shows trans-enoyl-CoA hydratase/3-hydroxyacyl-CoA dehydratase activity. Displays a broad chain length specificity, with a predilection for the C8 to C12 substrates. This Mycobacterium tuberculosis (strain ATCC 25618 / H37Rv) protein is 3-hydroxyacyl-thioester dehydratase X.